The chain runs to 317 residues: Transaldolase (317 aa).

The Schiff-base intermediate with substrate role is filled by lysine 126.

It belongs to the transaldolase family. Type 1 subfamily. Homodimer.

The protein localises to the cytoplasm. It carries out the reaction D-sedoheptulose 7-phosphate + D-glyceraldehyde 3-phosphate = D-erythrose 4-phosphate + beta-D-fructose 6-phosphate. It participates in carbohydrate degradation; pentose phosphate pathway; D-glyceraldehyde 3-phosphate and beta-D-fructose 6-phosphate from D-ribose 5-phosphate and D-xylulose 5-phosphate (non-oxidative stage): step 2/3. Its function is as follows. Transaldolase is important for the balance of metabolites in the pentose-phosphate pathway. The polypeptide is Transaldolase (Paraburkholderia xenovorans (strain LB400)).